The primary structure comprises 170 residues: Lipoprotein signal peptidase (170 aa).

3 helical membrane passes run 5 to 25, 70 to 90, and 98 to 118; these read VYHQYWFWYLAAFVVFLLDQG, WFFTIVAVAASVLLIVWICRV, and AFALSFILGGAVGNLYDRIIH. Residues Asp123 and Asp141 contribute to the active site. A helical transmembrane segment spans residues 137-157; it reads FNLADAAISLGAMVLIADLFI.

Belongs to the peptidase A8 family.

It is found in the cell inner membrane. It catalyses the reaction Release of signal peptides from bacterial membrane prolipoproteins. Hydrolyzes -Xaa-Yaa-Zaa-|-(S,diacylglyceryl)Cys-, in which Xaa is hydrophobic (preferably Leu), and Yaa (Ala or Ser) and Zaa (Gly or Ala) have small, neutral side chains.. It participates in protein modification; lipoprotein biosynthesis (signal peptide cleavage). In terms of biological role, this protein specifically catalyzes the removal of signal peptides from prolipoproteins. This is Lipoprotein signal peptidase from Cellvibrio japonicus (strain Ueda107) (Pseudomonas fluorescens subsp. cellulosa).